The following is a 142-amino-acid chain: Hemoglobin subunit alpha (142 aa).

Residues 2–142 enclose the Globin domain; that stretch reads VLSAADKSNV…VGTVLTSKYR (141 aa). Serine 4 carries the post-translational modification Phosphoserine. 2 positions are modified to N6-succinyllysine: lysine 8 and lysine 12. At lysine 17 the chain carries N6-acetyllysine; alternate. Residue lysine 17 is modified to N6-succinyllysine; alternate. Tyrosine 25 carries the post-translational modification Phosphotyrosine. Serine 36 bears the Phosphoserine mark. N6-succinyllysine is present on lysine 41. Residue serine 50 is modified to Phosphoserine. Residue histidine 59 participates in O2 binding. Histidine 88 lines the heme b pocket. A Phosphoserine modification is found at serine 103. Position 109 is a phosphothreonine (threonine 109). 2 positions are modified to phosphoserine: serine 125 and serine 132. Phosphothreonine is present on residues threonine 135 and threonine 138. At serine 139 the chain carries Phosphoserine.

Belongs to the globin family. Heterotetramer of two alpha chains and two beta chains. As to expression, red blood cells.

Its function is as follows. Involved in oxygen transport from the lung to the various peripheral tissues. In terms of biological role, hemopressin acts as an antagonist peptide of the cannabinoid receptor CNR1. Hemopressin-binding efficiently blocks cannabinoid receptor CNR1 and subsequent signaling. The protein is Hemoglobin subunit alpha (HBA) of Pantholops hodgsonii (Chiru).